Reading from the N-terminus, the 219-residue chain is Thiamine-phosphate synthase (219 aa).

Residues 48 to 52 and N84 contribute to the 4-amino-2-methyl-5-(diphosphooxymethyl)pyrimidine site; that span reads QFRQK. Residues D85 and D104 each contribute to the Mg(2+) site. S123 provides a ligand contact to 4-amino-2-methyl-5-(diphosphooxymethyl)pyrimidine. Position 150-152 (150-152) interacts with 2-[(2R,5Z)-2-carboxy-4-methylthiazol-5(2H)-ylidene]ethyl phosphate; it reads TPS. K153 lines the 4-amino-2-methyl-5-(diphosphooxymethyl)pyrimidine pocket. Residues G181 and 199–200 contribute to the 2-[(2R,5Z)-2-carboxy-4-methylthiazol-5(2H)-ylidene]ethyl phosphate site; that span reads IS.

The protein belongs to the thiamine-phosphate synthase family. It depends on Mg(2+) as a cofactor.

The catalysed reaction is 2-[(2R,5Z)-2-carboxy-4-methylthiazol-5(2H)-ylidene]ethyl phosphate + 4-amino-2-methyl-5-(diphosphooxymethyl)pyrimidine + 2 H(+) = thiamine phosphate + CO2 + diphosphate. It carries out the reaction 2-(2-carboxy-4-methylthiazol-5-yl)ethyl phosphate + 4-amino-2-methyl-5-(diphosphooxymethyl)pyrimidine + 2 H(+) = thiamine phosphate + CO2 + diphosphate. It catalyses the reaction 4-methyl-5-(2-phosphooxyethyl)-thiazole + 4-amino-2-methyl-5-(diphosphooxymethyl)pyrimidine + H(+) = thiamine phosphate + diphosphate. It functions in the pathway cofactor biosynthesis; thiamine diphosphate biosynthesis; thiamine phosphate from 4-amino-2-methyl-5-diphosphomethylpyrimidine and 4-methyl-5-(2-phosphoethyl)-thiazole: step 1/1. In terms of biological role, condenses 4-methyl-5-(beta-hydroxyethyl)thiazole monophosphate (THZ-P) and 2-methyl-4-amino-5-hydroxymethyl pyrimidine pyrophosphate (HMP-PP) to form thiamine monophosphate (TMP). The chain is Thiamine-phosphate synthase from Helicobacter pylori (strain HPAG1).